Here is a 141-residue protein sequence, read N- to C-terminus: UPF0310 protein Mflv_0785 (141 aa).

The protein belongs to the UPF0310 family.

This Mycolicibacterium gilvum (strain PYR-GCK) (Mycobacterium gilvum (strain PYR-GCK)) protein is UPF0310 protein Mflv_0785.